The primary structure comprises 219 residues: Ras-related protein Rab-3D (219 aa).

Alanine 2 is modified (N-acetylalanine). GDP is bound at residue 29–37 (GNSSVGKTS). GTP-binding residues include serine 31, serine 32, valine 33, glycine 34, lysine 35, threonine 36, serine 37, proline 49, and serine 53. Mg(2+) is bound at residue threonine 36. The Switch 1 motif lies at 49–58 (PAFVSTVGID). Threonine 54 and aspartate 77 together coordinate Mg(2+). Position 80 (glycine 80) interacts with GTP. Positions 80–96 (GQERYRTITTAYYRGAM) match the Switch 2 motif. Threonine 86 carries the post-translational modification Phosphothreonine; by LRRK2. GTP is bound by residues asparagine 135, lysine 136, aspartate 138, alanine 166, and lysine 167. GDP contacts are provided by residues 135 to 138 (NKCD) and 165 to 167 (SAK). Serine 190 is subject to Phosphoserine. The segment covering 190–199 (SLEPSSSSGS) has biased composition (low complexity). A disordered region spans residues 190-219 (SLEPSSSSGSNGKGPAVGDAPAPQPSSCSC). 2 S-geranylgeranyl cysteine lipidation sites follow: cysteine 217 and cysteine 219. The residue at position 219 (cysteine 219) is a Cysteine methyl ester.

It belongs to the small GTPase superfamily. Rab family. In terms of assembly, interacts with RIMS1, RIMS2, RPH3A, RPH3AL and RAB3IP. The GTP-bound form interacts with REP15. Interacts with CHM and CHML; phosphorylation at Thr-86 disrupts these interactions. Interacts with MADD (via uDENN domain); the GTP-bound form is preferred for interaction. The cofactor is Mg(2+). Post-translationally, phosphorylation of Thr-86 in the switch II region by LRRK2 prevents the association of RAB regulatory proteins, including CHM and CHML. Highly expressed in granulocytes of peripheral blood. Constitutively expressed at low levels in all hematopoietic cell lines investigated.

Its subcellular location is the cell membrane. The enzyme catalyses GTP + H2O = GDP + phosphate + H(+). Its activity is regulated as follows. Regulated by guanine nucleotide exchange factors (GEFs) which promote the exchange of bound GDP for free GTP. Regulated by GTPase activating proteins (GAPs) which increase the GTP hydrolysis activity. Inhibited by GDP dissociation inhibitors (GDIs) which prevent Rab-GDP dissociation. In terms of biological role, the small GTPases Rab are key regulators of intracellular membrane trafficking, from the formation of transport vesicles to their fusion with membranes. Rabs cycle between an inactive GDP-bound form and an active GTP-bound form that is able to recruit to membranes different sets of downstream effectors directly responsible for vesicle formation, movement, tethering and fusion. RAB3D may be involved in the insulin-induced exocytosis of GLUT4-containing vesicles in adipocytes. The sequence is that of Ras-related protein Rab-3D from Homo sapiens (Human).